Reading from the N-terminus, the 495-residue chain is MTSRDGYQWTPETGLTQGVPSLGVISPPTNIEDTDKDGPWDVIVIGGGYCGLTATRDLTVAGFKTLLLEARDRIGGRSWSSNIDGYPYEMGGTWVHWHQSHVWREITRYKMHNALSPSFNFSRGVNHFQLRTNPTTSTYMTHEAEDELLRSALHKFTNVDGTNGRTVLPFPHDMFYVPEFRKYDEMSYSERIDQIRDELSLNERSSLEAFILLCSGGTLENSSFGEFLHWWAMSGYTYQGCMDCLISYKFKDGQSAFARRFWEEAAGTGRLGYVFGCPVRSVVNERDAARVTARDGREFAAKRLVCTIPLNVLSTIQFSPALSTERISAMQAGHVNMCTKVHAEVDNKDMRSWTGIAYPFNKLCYAIGDGTTPAGNTHLVCFGTDANHIQPDEDVRETLKAVGQLAPGTFGVKRLVFHNWVKDEFAKGAWFFSRPGMVSECLQGLREKHRGVVFANSDWALGWRSFIDGAIEEGTRAARVVLEELGTKREVKARL.

Residues 1–19 show a composition bias toward polar residues; the sequence is MTSRDGYQWTPETGLTQGV. Positions 1–23 are disordered; that stretch reads MTSRDGYQWTPETGLTQGVPSLG. The short motif at 493 to 495 is the Microbody targeting signal element; it reads ARL.

This sequence belongs to the flavin monoamine oxidase family. FAD is required as a cofactor.

Its subcellular location is the peroxisome. The catalysed reaction is a secondary aliphatic amine + O2 + H2O = a primary amine + an aldehyde + H2O2. This is Monoamine oxidase N (maoN) from Aspergillus niger.